The primary structure comprises 292 residues: GTP cyclohydrolase FolE2 (292 aa).

This sequence belongs to the GTP cyclohydrolase IV family.

It catalyses the reaction GTP + H2O = 7,8-dihydroneopterin 3'-triphosphate + formate + H(+). The protein operates within cofactor biosynthesis; 7,8-dihydroneopterin triphosphate biosynthesis; 7,8-dihydroneopterin triphosphate from GTP: step 1/1. In terms of biological role, converts GTP to 7,8-dihydroneopterin triphosphate. The chain is GTP cyclohydrolase FolE2 from Staphylococcus aureus (strain Mu50 / ATCC 700699).